The following is a 202-amino-acid chain: Neurensin-2 (202 aa).

Helical transmembrane passes span 65–85 (VAVA…GYAV) and 116–136 (VVGA…LFLI). The disordered stretch occupies residues 162–202 (RDEPEKLSPAFHETSSQSPFLTPPSPFGQQSVQTSQPQRDL). The span at 188–202 (FGQQSVQTSQPQRDL) shows a compositional bias: polar residues.

It belongs to the VMP family. Expressed specifically in brain where it is widely expressed, with highest levels of expression in thalamus and hypothalamus. In brain, found in neural cell bodies and detected in many regions of the limbic system, such as the septum nucleus, horizontal and vertical limbs of the diagonal band, hippocampus, amygdaloid nucleus, and habernula nucleus. Also localizes to small vesicles found in the perinuclear region of Neuro2a and PC12 cells.

It localises to the membrane. May play a role in maintenance and/or transport of vesicles. The chain is Neurensin-2 from Mus musculus (Mouse).